The following is a 316-amino-acid chain: DNA-directed RNA polymerase subunit alpha (316 aa).

An alpha N-terminal domain (alpha-NTD) region spans residues 1 to 233 (MCMSQFPIEF…HWFNPLQTLE (233 aa)). The interval 245–316 (MAQLSNMLIE…LHCQLKKYVD (72 aa)) is alpha C-terminal domain (alpha-CTD).

The protein belongs to the RNA polymerase alpha chain family. In terms of assembly, in plastids the minimal PEP RNA polymerase catalytic core is composed of four subunits: alpha, beta, beta', and beta''. When a (nuclear-encoded) sigma factor is associated with the core the holoenzyme is formed, which can initiate transcription.

The protein resides in the plastid. Its subcellular location is the chloroplast. It catalyses the reaction RNA(n) + a ribonucleoside 5'-triphosphate = RNA(n+1) + diphosphate. Functionally, DNA-dependent RNA polymerase catalyzes the transcription of DNA into RNA using the four ribonucleoside triphosphates as substrates. In Cyanidioschyzon merolae (strain NIES-3377 / 10D) (Unicellular red alga), this protein is DNA-directed RNA polymerase subunit alpha.